The primary structure comprises 350 residues: DNA repair protein RAD51 homolog 2 (350 aa).

Residues 1-75 are interaction with RAD51C; it reads MSSKKLRRVG…TAYELKTRRS (75 aa). 108–115 contacts ATP; sequence GPPGCGKT.

The protein belongs to the RecA family. RAD51 subfamily. In terms of assembly, part of the BCDX2 complex consisting of RAD51B, RAD51C, RAD51D and XRCC2; the complex has a ring-like structure arranged into a flat disc around a central channel. The BCDX2 subcomplex RAD51B:RAD51C interacts with RAD51. Interacts with SWSAP1; involved in homologous recombination repair. Interacts with HELQ. In terms of processing, phosphorylated on tyrosine residues by BCR-ABL. In terms of tissue distribution, expressed in a wide range of tissues.

It localises to the nucleus. Involved in the homologous recombination repair (HRR) pathway of double-stranded DNA breaks arising during DNA replication or induced by DNA-damaging agents. May promote the assembly of presynaptic RAD51 nucleoprotein filaments. Binds single-stranded DNA and double-stranded DNA and has DNA-dependent ATPase activity. Part of the RAD51 paralog protein complex BCDX2 which acts in the BRCA1-BRCA2-dependent HR pathway. Upon DNA damage, BCDX2 acts downstream of BRCA2 recruitment and upstream of RAD51 recruitment. BCDX2 binds predominantly to the intersection of the four duplex arms of the Holliday junction and to junction of replication forks. The BCDX2 complex was originally reported to bind single-stranded DNA, single-stranded gaps in duplex DNA and specifically to nicks in duplex DNA. The BCDX2 subcomplex RAD51B:RAD51C exhibits single-stranded DNA-dependent ATPase activity suggesting an involvement in early stages of the HR pathway. This is DNA repair protein RAD51 homolog 2 (Rad51b) from Mus musculus (Mouse).